Here is an 89-residue protein sequence, read N- to C-terminus: Double-stranded DNA-binding protein (89 aa).

In terms of assembly, homodimer.

Its function is as follows. May play a role in transcription of several T4 genes. Binds double-stranded DNA and interacts preferentially with T4 late promoter regions. The protein is Double-stranded DNA-binding protein (dsbA) of Enterobacteria phage T4 (Bacteriophage T4).